The primary structure comprises 437 residues: Beta-1,3-galactosyl-O-glycosyl-glycoprotein beta-1,6-N-acetylglucosaminyltransferase 3 (437 aa).

At methionine 1 to arginine 12 the chain is on the cytoplasmic side. A helical; Signal-anchor for type II membrane protein transmembrane segment spans residues leucine 13–serine 30. The Lumenal segment spans residues leucine 31–leucine 437. Disulfide bonds link cysteine 70/cysteine 227, cysteine 161/cysteine 381, cysteine 182/cysteine 209, and cysteine 390/cysteine 422. An N-linked (GlcNAc...) asparagine glycan is attached at asparagine 288.

Belongs to the glycosyltransferase 14 family. N-glycosylated.

The protein resides in the golgi apparatus membrane. It catalyses the reaction a 3-O-[beta-D-galactosyl-(1-&gt;3)-N-acetyl-alpha-D-galactosaminyl]-L-seryl-[protein] + UDP-N-acetyl-alpha-D-glucosamine = 3-O-{beta-D-galactosyl-(1-&gt;3)-[N-acetyl-beta-D-glucosaminyl-(1-&gt;6)]-N-acetyl-alpha-D-galactosaminyl}-L-seryl-[protein] + UDP + H(+). It carries out the reaction a 3-O-[beta-D-galactosyl-(1-&gt;3)-N-acetyl-alpha-D-galactosaminyl]-L-threonyl-[protein] + UDP-N-acetyl-alpha-D-glucosamine = a 3-O-{beta-D-galactosyl-(1-&gt;3)-[N-acetyl-beta-D-glucosaminyl-(1-&gt;6)]-N-acetyl-alpha-D-galactosaminyl}-L-threonyl-[protein] + UDP + H(+). The enzyme catalyses a beta-D-Gal-(1-&gt;4)-beta-D-GlcNAc-(1-&gt;3)-beta-D-Gal-(1-&gt;4)-beta-D-GlcNAc derivative + UDP-N-acetyl-alpha-D-glucosamine = a beta-D-Gal-(1-&gt;4)-beta-D-GlcNAc-(1-&gt;3)-[beta-D-GlcNAc-(1-&gt;6)]-beta-D-Gal-(1-&gt;4)-N-acetyl-beta-D-glucosaminyl derivative + UDP + H(+). The catalysed reaction is 3-O-[N-acetyl-beta-D-glucosaminyl-(1-&gt;3)-N-acetyl-alpha-D-galactosaminyl]-L-seryl-[protein] + UDP-N-acetyl-alpha-D-glucosamine = 3-O-[N-acetyl-beta-D-glucosaminyl-(1-&gt;3)-[N-acetyl-beta-D-glucosaminyl-(1-&gt;6)]-N-acetyl-alpha-D-galactosaminyl]-L-seryl-[protein] + UDP + H(+). It catalyses the reaction a 3-O-[N-acetyl-beta-D-glucosaminyl-(1-&gt;3)-N-acetyl-alpha-D-galactosaminyl]-L-threonyl-[protein] + UDP-N-acetyl-alpha-D-glucosamine = 3-O-[N-acetyl-beta-D-glucosaminyl-(1-&gt;3)-[N-acetyl-beta-D-glucosaminyl-(1-&gt;6)]-N-acetyl-alpha-D-galactosaminyl]-L-threonyl-[protein] + UDP + H(+). Its pathway is protein modification; protein glycosylation. Functionally, glycosyltransferase that can synthesize all known mucin beta 6 N-acetylglucosaminides. Mediates core 2 and core 4 O-glycan branching, 2 important steps in mucin-type biosynthesis. Also has I-branching enzyme activity by converting linear into branched poly-N-acetyllactosaminoglycans, leading to introduce the blood group I antigen during embryonic development. The polypeptide is Beta-1,3-galactosyl-O-glycosyl-glycoprotein beta-1,6-N-acetylglucosaminyltransferase 3 (Gcnt3) (Mus musculus (Mouse)).